The chain runs to 190 residues: Crossover junction endodeoxyribonuclease RuvC (190 aa).

Active-site residues include Asp-7, Glu-67, and Asp-140. Mg(2+)-binding residues include Asp-7, Glu-67, and Asp-140.

Belongs to the RuvC family. As to quaternary structure, homodimer which binds Holliday junction (HJ) DNA. The HJ becomes 2-fold symmetrical on binding to RuvC with unstacked arms; it has a different conformation from HJ DNA in complex with RuvA. In the full resolvosome a probable DNA-RuvA(4)-RuvB(12)-RuvC(2) complex forms which resolves the HJ. Requires Mg(2+) as cofactor.

The protein resides in the cytoplasm. The enzyme catalyses Endonucleolytic cleavage at a junction such as a reciprocal single-stranded crossover between two homologous DNA duplexes (Holliday junction).. Functionally, the RuvA-RuvB-RuvC complex processes Holliday junction (HJ) DNA during genetic recombination and DNA repair. Endonuclease that resolves HJ intermediates. Cleaves cruciform DNA by making single-stranded nicks across the HJ at symmetrical positions within the homologous arms, yielding a 5'-phosphate and a 3'-hydroxyl group; requires a central core of homology in the junction. The consensus cleavage sequence is 5'-(A/T)TT(C/G)-3'. Cleavage occurs on the 3'-side of the TT dinucleotide at the point of strand exchange. HJ branch migration catalyzed by RuvA-RuvB allows RuvC to scan DNA until it finds its consensus sequence, where it cleaves and resolves the cruciform DNA. The polypeptide is Crossover junction endodeoxyribonuclease RuvC (Fusobacterium nucleatum subsp. nucleatum (strain ATCC 25586 / DSM 15643 / BCRC 10681 / CIP 101130 / JCM 8532 / KCTC 2640 / LMG 13131 / VPI 4355)).